The primary structure comprises 388 residues: uncharacterized protein (388 aa).

The [4Fe-4S] cluster site is built by cysteine 18, cysteine 24, cysteine 27, and cysteine 99. S-adenosyl-L-methionine is bound by residues glutamine 212, glutamate 262, and asparagine 313. The active-site Nucleophile is cysteine 343.

It belongs to the class I-like SAM-binding methyltransferase superfamily. RNA M5U methyltransferase family.

This is an uncharacterized protein from Bdellovibrio bacteriovorus (strain ATCC 15356 / DSM 50701 / NCIMB 9529 / HD100).